The primary structure comprises 300 residues: Porphobilinogen deaminase (300 aa).

Position 242 is an S-(dipyrrolylmethanemethyl)cysteine (Cys-242).

Belongs to the HMBS family. As to quaternary structure, monomer. The cofactor is dipyrromethane.

It carries out the reaction 4 porphobilinogen + H2O = hydroxymethylbilane + 4 NH4(+). Its pathway is porphyrin-containing compound metabolism; protoporphyrin-IX biosynthesis; coproporphyrinogen-III from 5-aminolevulinate: step 2/4. Tetrapolymerization of the monopyrrole PBG into the hydroxymethylbilane pre-uroporphyrinogen in several discrete steps. The sequence is that of Porphobilinogen deaminase from Rickettsia bellii (strain OSU 85-389).